A 928-amino-acid polypeptide reads, in one-letter code: Protein Niban 1 (928 aa).

G2 carries N-myristoyl glycine lipidation. 5 positions are modified to phosphoserine: S579, S582, S596, S602, and S646. Positions 580–596 (VSSLTDLKPPTGSNQAS) are enriched in polar residues. Residues 580 to 600 (VSSLTDLKPPTGSNQASPARR) are disordered. Disordered stretches follow at residues 618-654 (VFQE…GTEQ) and 669-707 (ATED…TASG). Over residues 690–701 (LEDEEPAQEEPE) the composition is skewed to acidic residues. Phosphoserine is present on S708. 2 disordered regions span residues 723–877 (PVDS…ATAS) and 899–928 (PNPD…PSEE). Residues 801-818 (GGLTEEPLGPMEGELPGE) show a composition bias toward low complexity. Residues 825 to 834 (HEGRGGKCTE) show a composition bias toward basic and acidic residues. The segment covering 865-877 (MGGQSSAAQATAS) has biased composition (low complexity). A compositionally biased stretch (basic and acidic residues) spans 905-915 (LSHKDDVKEGE). At S926 the chain carries Phosphoserine.

The protein belongs to the Niban family. As to expression, expressed in various types of thyroid tumor such as papillary thyroid carcinomas and oxyphilic thyroid tumors but not in normal thyroid tissue (at protein level). Strongly expressed in heart, skeletal muscle, pancreas, white blood cells and prostate with moderate expression in colon and spleen. Expressed in renal carcinoma cells but not in normal kidney.

The protein localises to the cytoplasm. The protein resides in the membrane. In terms of biological role, regulates phosphorylation of a number of proteins involved in translation regulation including EIF2A, EIF4EBP1 and RPS6KB1. May be involved in the endoplasmic reticulum stress response. This is Protein Niban 1 from Homo sapiens (Human).